The chain runs to 378 residues: Succinyl-diaminopimelate desuccinylase (378 aa).

Residue His-66 participates in Zn(2+) binding. The active site involves Asp-68. Position 100 (Asp-100) interacts with Zn(2+). The active-site Proton acceptor is the Glu-134. Zn(2+)-binding residues include Glu-135, Glu-163, and His-350.

It belongs to the peptidase M20A family. DapE subfamily. In terms of assembly, homodimer. It depends on Zn(2+) as a cofactor. Co(2+) is required as a cofactor.

The enzyme catalyses N-succinyl-(2S,6S)-2,6-diaminopimelate + H2O = (2S,6S)-2,6-diaminopimelate + succinate. The protein operates within amino-acid biosynthesis; L-lysine biosynthesis via DAP pathway; LL-2,6-diaminopimelate from (S)-tetrahydrodipicolinate (succinylase route): step 3/3. Functionally, catalyzes the hydrolysis of N-succinyl-L,L-diaminopimelic acid (SDAP), forming succinate and LL-2,6-diaminopimelate (DAP), an intermediate involved in the bacterial biosynthesis of lysine and meso-diaminopimelic acid, an essential component of bacterial cell walls. In Hydrogenovibrio crunogenus (strain DSM 25203 / XCL-2) (Thiomicrospira crunogena), this protein is Succinyl-diaminopimelate desuccinylase.